Here is a 2266-residue protein sequence, read N- to C-terminus: Little elongation complex subunit 1 (2266 aa).

Residues 23-186 (CASLQQNLNE…KQKNEKELRH (164 aa)) are a coiled coil. 2 disordered regions span residues 223–259 (GEGSRCVPEKPAKAITSSRVPGEDGTLPPTQGSPLRT) and 517–540 (PAQEKEAAPGKSELCSSPLGKRPL). The segment covering 250 to 259 (PPTQGSPLRT) has biased composition (polar residues). A phosphoserine mark is found at serine 255, serine 533, serine 558, and serine 589. The segment at 591 to 623 (ELEKEKEDTQGFTLGESPESEDDDSGDGMDVAG) is disordered. Acidic residues predominate over residues 608–617 (PESEDDDSGD). Phosphoserine is present on serine 707. Threonine 832 carries the phosphothreonine modification. A Phosphoserine modification is found at serine 925. The segment at 925–955 (SPEVSASRRKLDFNSPGGSSPVENSDCSTNS) is disordered. Positions 940–955 (PGGSSPVENSDCSTNS) are enriched in polar residues. Serine 958 is subject to Phosphoserine. Disordered stretches follow at residues 977-1001 (VQGDGQKQRQPQATDLDSSGTHGSE) and 1107-1133 (TEVESEAFSCSEGSEQQDAPDDSQKNL). Polar residues predominate over residues 984-998 (QRQPQATDLDSSGTH). Lysine 1218 is subject to N6-acetyllysine. 3 disordered regions span residues 1295-1372 (TTEN…PSAL), 1467-1510 (AEKS…KSRL), and 1543-1707 (NSKL…SASE). Composition is skewed to polar residues over residues 1306–1319 (RETTGSSSHASEPT), 1328–1344 (EGSSPISGMPQNENPQS), 1487–1505 (NNLSCPQEDVSSSGQSTNF), 1565–1588 (NKPVKTSASSRVETHQSEVAQSFS), and 1594–1605 (TKTQRSQTQTIL). Residue serine 1588 is modified to Phosphoserine. Composition is skewed to low complexity over residues 1609-1620 (DTSTPTDCSPDT) and 1637-1671 (APLIATPPRTSQPLSPLISSSSPSSPASPVGQVSP). A Phosphoserine modification is found at serine 1617. Threonine 1642 is modified (phosphothreonine). Phosphoserine is present on residues serine 1692, serine 1697, serine 1699, serine 1701, serine 1712, serine 1838, and serine 1854. The disordered stretch occupies residues 1809-1902 (TGSSSGGDCN…AVSAVSQLPL (94 aa)). Over residues 1825–1843 (LGTQQDSSGKRTLSTSTLR) the composition is skewed to polar residues. The segment covering 1889-1901 (CSSPAVSAVSQLP) has biased composition (polar residues). Serine 1903 carries the post-translational modification Phosphoserine.

This sequence belongs to the ICE1 family. As to quaternary structure, component of the little elongation complex (LEC), at least composed of ELL (ELL, ELL2 or ELL3), ZC3H8, ICE1 and ICE2. Interacts (via N-terminus domain) with ELL. Interacts (via C-terminus domain) with ICE2 and ZC3H8.

The protein localises to the nucleus. Its subcellular location is the cajal body. Its function is as follows. Component of the little elongation complex (LEC), a complex required to regulate small nuclear RNA (snRNA) gene transcription by RNA polymerase II and III. Specifically acts as a scaffold protein that promotes the LEC complex formation and recruitment and RNA polymerase II occupancy at snRNA genes in subnuclear bodies. The protein is Little elongation complex subunit 1 (ICE1) of Homo sapiens (Human).